The primary structure comprises 34 residues: Potassium channel toxin alpha-KTx 6.13 (34 aa).

4 disulfide bridges follow: C3-C24, C9-C29, C13-C31, and C19-C34. A Cysteine amide modification is found at C34.

The protein belongs to the short scorpion toxin superfamily. Potassium channel inhibitor family. Alpha-KTx 06 subfamily. Expressed by the venom gland.

Its subcellular location is the secreted. Antagonist of Kv1/KCNA potassium channels. Shows a weak interaction with muscle-type nicotinic acetylcholine receptors (nAChR), since it inhibits alpha-bungarotoxin binding to both muscle-type nAChR from T.californica (IC(50)=490 nM). This suggests it probably weakly inhibits nAChR. This Heterometrus spinifer (Asia giant forest scorpion) protein is Potassium channel toxin alpha-KTx 6.13.